We begin with the raw amino-acid sequence, 337 residues long: Secreted effector protein EspF(U) (337 aa).

A run of 5 repeats spans residues 96-142, 143-189, 190-236, 237-283, and 284-330. The segment at 96 to 330 is 5 X 48 AA approximate tandem repeats; that stretch reads IKPARSMAEH…RLMQHLAEHG (235 aa). Positions 291–312 are disordered; that stretch reads AEHIPPAPNWPAPTPPVQNEQS. The span at 295 to 306 shows a compositional bias: pro residues; the sequence is PPAPNWPAPTPP.

This sequence belongs to the EspF(U)/TccP family. As to quaternary structure, interacts with host BAIAP2 and host WASL/N-WASP. Can also interact with host proteins BAIAP2L1 and WAS/WASP.

The protein resides in the secreted. Its subcellular location is the host cytoplasm. In terms of biological role, required for efficient pedestal formation in host epithelial cells during infection. Acts as an intermediate between Tir (via host BAIAP2) and host WASL/N-WASP. Directly binds and activates WASL/N-WASP, which stimulates actin polymerization and leads to the formation of actin pedestals at the sites of bacterial adhesion. This is Secreted effector protein EspF(U) (espF(U)) from Escherichia coli O157:H7.